The chain runs to 355 residues: Protein ATP1B4 (355 aa).

The Nuclear portion of the chain corresponds to 1 to 108; sequence MRRQLRSRRA…SLARTGQSLS (108 aa). Residues 35-76 form a disordered region; it reads EEEEAEEARVMVVPDLEEEEKEEEEEKEEDEKEEEESHHQDT. A compositionally biased stretch (acidic residues) spans 49–68; sequence DLEEEEKEEEEEKEEDEKEE. The helical; Signal-anchor for type II membrane protein transmembrane segment at 109–129 threads the bilayer; sequence LLLVIYFFFYASLAAVITLCM. Residues 130 to 355 are Perinuclear space-facing; sequence YTLFLTISPY…RVIFTLNIET (226 aa).

It belongs to the X(+)/potassium ATPases subunit beta family. In terms of assembly, associates with a SMAD7-transcriptional complex. Interacts with SNW1 and TOR1AIP1. Does not associate with known Na,K-ATPase alpha-subunits. Expressed in skeletal muscle (at protein level). Expressed during postnatal development in skeletal muscle and heart.

It is found in the nucleus inner membrane. Functionally, may act as a transcriptional coregulator during muscle development through its interaction with SNW1. Has lost its ancestral function as a Na,K-ATPase beta-subunit. In Sus scrofa (Pig), this protein is Protein ATP1B4 (ATP1B4).